We begin with the raw amino-acid sequence, 448 residues long: Beta-glucosidase A (448 aa).

E166 functions as the Proton donor in the catalytic mechanism. E355 acts as the Nucleophile in catalysis.

This sequence belongs to the glycosyl hydrolase 1 family.

The enzyme catalyses Hydrolysis of terminal, non-reducing beta-D-glucosyl residues with release of beta-D-glucose.. The protein operates within glycan metabolism; cellulose degradation. This is Beta-glucosidase A (bglA) from Acetivibrio thermocellus (strain ATCC 27405 / DSM 1237 / JCM 9322 / NBRC 103400 / NCIMB 10682 / NRRL B-4536 / VPI 7372) (Clostridium thermocellum).